Consider the following 256-residue polypeptide: Ribonuclease 3-like protein 1 (256 aa).

The RNase III domain occupies 22–168; that stretch reads AEVERALGGY…IVGAVYLDSK (147 aa). Mg(2+) contacts are provided by E65, D154, and E157.

Mg(2+) serves as cofactor. The cofactor is Mn(2+).

Its function is as follows. Cleaves double-stranded RNA (dsRNA). The polypeptide is Ribonuclease 3-like protein 1 (Oryza sativa subsp. japonica (Rice)).